The primary structure comprises 214 residues: Probable nicotinate-nucleotide adenylyltransferase (214 aa).

It belongs to the NadD family.

The catalysed reaction is nicotinate beta-D-ribonucleotide + ATP + H(+) = deamido-NAD(+) + diphosphate. It functions in the pathway cofactor biosynthesis; NAD(+) biosynthesis; deamido-NAD(+) from nicotinate D-ribonucleotide: step 1/1. Functionally, catalyzes the reversible adenylation of nicotinate mononucleotide (NaMN) to nicotinic acid adenine dinucleotide (NaAD). The polypeptide is Probable nicotinate-nucleotide adenylyltransferase (Pseudomonas aeruginosa (strain UCBPP-PA14)).